The following is a 245-amino-acid chain: Eukaryotic translation initiation factor 3 subunit K (245 aa).

The PCI domain occupies 46 to 227 (YDCYANLALL…EAKGTVVREN (182 aa)).

The protein belongs to the eIF-3 subunit K family. Component of the eukaryotic translation initiation factor 3 (eIF-3) complex.

It localises to the cytoplasm. Component of the eukaryotic translation initiation factor 3 (eIF-3) complex, which is involved in protein synthesis of a specialized repertoire of mRNAs and, together with other initiation factors, stimulates binding of mRNA and methionyl-tRNAi to the 40S ribosome. The eIF-3 complex specifically targets and initiates translation of a subset of mRNAs involved in cell proliferation. In Sclerotinia sclerotiorum (strain ATCC 18683 / 1980 / Ss-1) (White mold), this protein is Eukaryotic translation initiation factor 3 subunit K.